Here is a 378-residue protein sequence, read N- to C-terminus: Glutamate 5-kinase (378 aa).

An ATP-binding site is contributed by lysine 20. Substrate is bound by residues serine 60, aspartate 147, and asparagine 159. ATP is bound by residues 179–180 (TD) and 221–227 (TGGMLTK). Residues 286–364 (RGRVVLDDGA…SQIARILGSM (79 aa)) form the PUA domain.

This sequence belongs to the glutamate 5-kinase family.

Its subcellular location is the cytoplasm. It carries out the reaction L-glutamate + ATP = L-glutamyl 5-phosphate + ADP. The protein operates within amino-acid biosynthesis; L-proline biosynthesis; L-glutamate 5-semialdehyde from L-glutamate: step 1/2. Catalyzes the transfer of a phosphate group to glutamate to form L-glutamate 5-phosphate. This chain is Glutamate 5-kinase, found in Bordetella pertussis (strain Tohama I / ATCC BAA-589 / NCTC 13251).